A 186-amino-acid polypeptide reads, in one-letter code: Putative manganese efflux pump MntP (186 aa).

6 helical membrane-spanning segments follow: residues 3 to 23, 39 to 59, 65 to 85, 109 to 129, 133 to 153, and 166 to 186; these read PIAL…AAIG, IGII…LIGK, VEAW…LHMI, CLTA…LAFI, IWIA…IGIM, and AEIF…YGQL.

This sequence belongs to the MntP (TC 9.B.29) family.

Its subcellular location is the cell inner membrane. In terms of biological role, probably functions as a manganese efflux pump. The chain is Putative manganese efflux pump MntP from Alcanivorax borkumensis (strain ATCC 700651 / DSM 11573 / NCIMB 13689 / SK2).